The primary structure comprises 622 residues: Deoxynucleoside triphosphate triphosphohydrolase SAMHD1 (622 aa).

In terms of domain architecture, SAM spans 26 to 89; that stretch reads WDVEDTVAYL…LHCLQKLSQI (64 aa). GTP is bound by residues lysine 95 and valine 96. Asparagine 98 provides a ligand contact to dGTP. GTP is bound by residues aspartate 116, glutamine 121, and arginine 124. Positions 128, 129, 135, and 143 each coordinate dGTP. Glutamine 128 serves as a coordination point for dATP. Glutamine 128 lines the dCTP pocket. DTTP is bound at residue glutamine 128. A dATP-binding site is contributed by arginine 143. Arginine 143 contributes to the dCTP binding site. Residue arginine 143 coordinates dTTP. Residues 143–296 enclose the HD domain; sequence RFEHSIGVGY…GIDVDKWDYF (154 aa). Mn(2+)-binding residues include histidine 146, histidine 185, and aspartate 186. Residues histidine 189 and histidine 194 each contribute to the dATP site. Positions 189 and 194 each coordinate dCTP. Residues histidine 189 and histidine 194 each coordinate dTTP. The active site involves histidine 212. Mn(2+) is bound at residue aspartate 291. The dGTP site is built by lysine 292, tyrosine 295, aspartate 299, arginine 313, arginine 332, lysine 334, asparagine 338, arginine 346, tyrosine 354, glutamine 355, histidine 356, and lysine 357. Residues lysine 292, tyrosine 295, and aspartate 299 each coordinate dATP. Residues lysine 292, tyrosine 295, and aspartate 299 each coordinate dCTP. Residues lysine 292, tyrosine 295, and aspartate 299 each contribute to the dTTP site. Residue arginine 346 coordinates dATP. Arginine 346 provides a ligand contact to dCTP. Glutamine 355 provides a ligand contact to dATP. Glutamine 355 contributes to the dCTP binding site. A dTTP-binding site is contributed by glutamine 355. Residues arginine 431, lysine 435, and lysine 502 each coordinate GTP. Lysine 502 is a binding site for dGTP. The segment at 571–622 is disordered; that stretch reads TPLKQDWHAREDEDEEEEEKHRQNQTLPHHTPQRTGRNVKVDLFQARGETKL. Positions 594 to 606 are enriched in polar residues; that stretch reads NQTLPHHTPQRTG.

Belongs to the SAMHD1 family. In terms of assembly, homodimer; in absence of GTP and dNTP. Homotetramer; in GTP- and dNTP-bound form. Interacts with rbbp8/CtIP. It depends on Zn(2+) as a cofactor.

The protein localises to the nucleus. It is found in the chromosome. It catalyses the reaction a 2'-deoxyribonucleoside 5'-triphosphate + H2O = a 2'-deoxyribonucleoside + triphosphate + H(+). The catalysed reaction is dATP + H2O = 2'-deoxyadenosine + triphosphate + H(+). It carries out the reaction dCTP + H2O = 2'-deoxycytidine + triphosphate + H(+). The enzyme catalyses dGTP + H2O = 2'-deoxyguanosine + triphosphate + H(+). It catalyses the reaction dTTP + H2O = thymidine + triphosphate + H(+). With respect to regulation, allosterically activated and regulated via the combined actions of GTP and dNTPs (dATP, dGTP, dTTP and dCTP): Allosteric site 1 binds GTP, while allosteric site 2 binds dNTP. Allosteric activation promotes the formation of highly active homotetramers. Functionally, protein that acts both as a host restriction factor involved in defense response to virus and as a regulator of DNA end resection at stalled replication forks. Has deoxynucleoside triphosphate (dNTPase) activity, which is required to restrict infection by viruses: dNTPase activity reduces cellular dNTP levels to levels too low for retroviral reverse transcription to occur, blocking early-stage virus replication in dendritic and other myeloid cells. Functions during S phase at stalled DNA replication forks to promote the resection of gapped or reversed forks: acts by stimulating the exonuclease activity of MRE11, activating the ATR-CHK1 pathway and allowing the forks to restart replication. Its ability to promote degradation of nascent DNA at stalled replication forks is required to prevent induction of type I interferons, thereby preventing chronic inflammation. Ability to promote DNA end resection at stalled replication forks is independent of dNTPase activity. The protein is Deoxynucleoside triphosphate triphosphohydrolase SAMHD1 of Danio rerio (Zebrafish).